The sequence spans 151 residues: MADESNTGSIAAAVAPNADVKAPAAKKKRSPRRQKAVAEPRRAVSETPAAKPRRYSEQQRKEKLKLIETQVTEGKVTLKDAIKSAGISEQTYYQWKRTVKPVEQKAEKRLPTGEELADLVRLEEENQRLRKLLAEKLRAENADLRKRLGLD.

Positions 1–61 are disordered; that stretch reads MADESNTGSI…PRRYSEQQRK (61 aa). A compositionally biased stretch (low complexity) spans 11 to 23; that stretch reads AAAVAPNADVKAP. The segment covering 24–35 has biased composition (basic residues); that stretch reads AAKKKRSPRRQK.

This sequence belongs to the SyrB family.

In terms of biological role, seems to affect the transcription of cya3. May be negatively autoregulated. The polypeptide is Probable transcriptional regulator syrB2 (syrB2) (Rhizobium meliloti (strain 1021) (Ensifer meliloti)).